Here is a 433-residue protein sequence, read N- to C-terminus: Serine/threonine-protein kinase STK11 (433 aa).

S31 is subject to Phosphoserine. 2 positions are modified to N6-acetyllysine: K44 and K48. A sufficient for interaction with SIRT1 region spans residues 45–90 (LIGKYLMGDLLGEGSYGKVKEVLDSETLCRRAVKILKKKKLRRIPN). The Protein kinase domain maps to 49–309 (YLMGDLLGEG…IRQIRQHSWF (261 aa)). Residues 55-63 (LGEGSYGKV) and K78 contribute to the ATP site. N6-acetyllysine is present on residues K96 and K97. Residue D176 is the Proton acceptor of the active site. T189 carries the post-translational modification Phosphothreonine; by autocatalysis. An N6-acetyllysine mark is found at K296 and K311. A disordered region spans residues 312-331 (KHPPAEAPVPIPPSPDTKDR). The segment covering 316-326 (AEAPVPIPPSP) has biased composition (pro residues). Phosphoserine is present on S325. T336 is subject to Phosphothreonine; by autocatalysis. T363 is modified (phosphothreonine; by ATM and autocatalysis). The disordered stretch occupies residues 397–433 (AAQLSTKSRAEGRAPNPARKACSASSKIRRLSACKQQ). Phosphoserine occurs at positions 399 and 401. K416 carries the post-translational modification N6-acetyllysine. The S-palmitoyl cysteine moiety is linked to residue C418. Residue K423 is modified to N6-acetyllysine. The span at 423 to 433 (KIRRLSACKQQ) shows a compositional bias: basic residues. S428 is subject to Phosphoserine; by autocatalysis, PKA, PKC/PRKCZ and RPS6KA1. Cysteine methyl ester is present on C430. Residue C430 is the site of S-farnesyl cysteine attachment. K431 carries the N6-acetyllysine modification. Positions 431–433 (KQQ) are cleaved as a propeptide — removed in mature form.

Belongs to the protein kinase superfamily. CAMK Ser/Thr protein kinase family. LKB1 subfamily. Catalytic component of a trimeric complex composed of STK11/LKB1, STRAD (STRADA or STRADB) and CAB39/MO25 (CAB39/MO25alpha or CAB39L/MO25beta): the complex tethers STK11/LKB1 in the cytoplasm and stimulates its catalytic activity. Found in a ternary complex composed of SMAD4, STK11/LKB1 and STK11IP. Interacts with p53/TP53, SMAD4, STK11IP and WDR6. Interacts with NR4A1. Interacts with NISCH; this interaction may increase STK11 activity. Interacts with PTEN; leading to PTEN phosphorylation. Interacts with SIRT1; the interaction deacetylates STK11. Interacts with CDKN1A. Requires Mg(2+) as cofactor. The cofactor is Mn(2+). In terms of processing, phosphorylated by ATM at Thr-363 following ionizing radiation (IR). Phosphorylation at Ser-428 by RPS6KA1 and/or some PKA is required to inhibit cell growth. Phosphorylation at Ser-428 is also required during neuronal polarization to mediate phosphorylation of BRSK1 and BRSK2. Phosphorylation by PKC/PRKCZ at Ser-399 in isoform 2 promotes metformin (or peroxynitrite)-induced nuclear export of STK11 and activation of AMPK. UV radiation-induced phosphorylation at Thr-363 mediates CDKN1A degradation. Acetylated. Deacetylation at Lys-48 enhances cytoplasmic localization and kinase activity in vitro. As to expression, ubiquitously expressed. Strongest expression in testis and fetal liver.

It localises to the nucleus. It is found in the cytoplasm. The protein localises to the membrane. Its subcellular location is the mitochondrion. The enzyme catalyses L-seryl-[protein] + ATP = O-phospho-L-seryl-[protein] + ADP + H(+). The catalysed reaction is L-threonyl-[protein] + ATP = O-phospho-L-threonyl-[protein] + ADP + H(+). Its activity is regulated as follows. Activated by forming a complex with STRAD (STRADA or STRADB) and CAB39/MO25 (CAB39/MO25alpha or CAB39L/MO25beta): STRADA (or STRADB)-binding promotes a conformational change of STK11/LKB1 in an active conformation, which is stabilized by CAB39/MO25alpha (or CAB39L/MO25beta) interacting with the STK11/LKB1 activation loop. Sequestration in the nucleus by NR4A1 prevents it from phosphorylating and activating cytoplasmic AMPK. Functionally, tumor suppressor serine/threonine-protein kinase that controls the activity of AMP-activated protein kinase (AMPK) family members, thereby playing a role in various processes such as cell metabolism, cell polarity, apoptosis and DNA damage response. Acts by phosphorylating the T-loop of AMPK family proteins, thus promoting their activity: phosphorylates PRKAA1, PRKAA2, BRSK1, BRSK2, MARK1, MARK2, MARK3, MARK4, NUAK1, NUAK2, SIK1, SIK2, SIK3 and SNRK but not MELK. Also phosphorylates non-AMPK family proteins such as STRADA, PTEN and possibly p53/TP53. Acts as a key upstream regulator of AMPK by mediating phosphorylation and activation of AMPK catalytic subunits PRKAA1 and PRKAA2 and thereby regulates processes including: inhibition of signaling pathways that promote cell growth and proliferation when energy levels are low, glucose homeostasis in liver, activation of autophagy when cells undergo nutrient deprivation, and B-cell differentiation in the germinal center in response to DNA damage. Also acts as a regulator of cellular polarity by remodeling the actin cytoskeleton. Required for cortical neuron polarization by mediating phosphorylation and activation of BRSK1 and BRSK2, leading to axon initiation and specification. Involved in DNA damage response: interacts with p53/TP53 and recruited to the CDKN1A/WAF1 promoter to participate in transcription activation. Able to phosphorylate p53/TP53; the relevance of such result in vivo is however unclear and phosphorylation may be indirect and mediated by downstream STK11/LKB1 kinase NUAK1. Also acts as a mediator of p53/TP53-dependent apoptosis via interaction with p53/TP53: translocates to the mitochondrion during apoptosis and regulates p53/TP53-dependent apoptosis pathways. Regulates UV radiation-induced DNA damage response mediated by CDKN1A. In association with NUAK1, phosphorylates CDKN1A in response to UV radiation and contributes to its degradation which is necessary for optimal DNA repair. Its function is as follows. Has a role in spermiogenesis. In Homo sapiens (Human), this protein is Serine/threonine-protein kinase STK11.